We begin with the raw amino-acid sequence, 526 residues long: Biotin carboxylase 2, chloroplastic (526 aa).

The N-terminal 71 residues, 1-71, are a transit peptide targeting the chloroplast; that stretch reads MEATLPVCKS…GVTCRAEKIL (71 aa). ATP is bound by residues Lys181, 213 to 274, Lys223, 229 to 230, 265 to 268, and His273; these read ASEI…PRHI, GG, and EKYV. One can recognise an ATP-grasp domain in the interval 185-382; sequence RETMKKANVP…LIEEQIRVAM (198 aa). Lys302 lines the hydrogencarbonate pocket. Glu340 and Glu353 together coordinate ATP. Positions 340, 353, and 355 each coordinate Mg(2+). The Mn(2+) site is built by Glu340, Glu353, and Asn355. 3 residues coordinate hydrogencarbonate: Arg357, Val360, and Arg403. Residue Arg357 is part of the active site. Arg403 is a binding site for biotin.

As to quaternary structure, acetyl-CoA carboxylase is a heterohexamer composed of biotin carboxyl carrier protein, biotin carboxylase and two subunits each of ACCase subunit alpha and ACCase plastid-coded subunit beta (accD). Mg(2+) serves as cofactor. The cofactor is Mn(2+).

Its subcellular location is the plastid. The protein localises to the chloroplast. It catalyses the reaction N(6)-biotinyl-L-lysyl-[protein] + hydrogencarbonate + ATP = N(6)-carboxybiotinyl-L-lysyl-[protein] + ADP + phosphate + H(+). It participates in lipid metabolism; malonyl-CoA biosynthesis; malonyl-CoA from acetyl-CoA: step 1/1. This protein is a component of the acetyl coenzyme A carboxylase complex; first, biotin carboxylase catalyzes the carboxylation of the carrier protein and then the transcarboxylase transfers the carboxyl group to form malonyl-CoA. In Populus trichocarpa (Western balsam poplar), this protein is Biotin carboxylase 2, chloroplastic.